Here is a 1862-residue protein sequence, read N- to C-terminus: Ankyrin-1 (1862 aa).

Residues 1-827 (MGFCKADAAT…DELVGSKAER (827 aa)) are 89 kDa domain. ANK repeat units lie at residues 40–69 (NGLN…ILET), 73–102 (KGNT…NVNA), 106–135 (KGFT…NQNV), 139–168 (DGFT…KGKV), 170–197 (LPAL…NPDV), 201–230 (TGFT…SVNF), 234–263 (NGIT…QIET), 267–296 (DELT…PIQA), 300–329 (NGLS…EIDD), 333–362 (DHLT…KPNS), 366–395 (NGFT…SIDA), 399–428 (SGLT…SPNV), 432–461 (KVET…KANA), 465–494 (DDQT…SPNL), 498–527 (AGHT…SQAC), 531–560 (KGFT…HPNA), 564–593 (NGLT…SPHS), 597–626 (NGYT…SANA), 630–659 (QGVT…NGNL), 663–692 (SGLT…TVDA), 696–725 (MGYT…DVNA), 729–758 (LGYS…SPNE), and 762–791 (NGTT…ETSV). Lysine 55 bears the Phosphoserine mark. The residue at position 101 (asparagine 101) is a (3S)-3-hydroxyasparagine; by HIF1AN; partial. Asparagine 229 is subject to (3S)-3-hydroxyasparagine; by HIF1AN. Serine 425 bears the Phosphoserine mark. Residues asparagine 427 and asparagine 460 each carry the (3S)-3-hydroxyasparagine; by HIF1AN modification. (3S)-3-hydroxyasparagine; by HIF1AN is present on residues asparagine 625 and asparagine 658. Aspartate 691 carries the post-translational modification (3S)-3-hydroxyaspartate; by HIF1AN. The residue at position 724 (asparagine 724) is a (3S)-3-hydroxyasparagine; by HIF1AN. Residue serine 755 is modified to Phosphoserine. Asparagine 757 carries the post-translational modification (3S)-3-hydroxyasparagine; by HIF1AN. Phosphoserine occurs at positions 777, 813, 830, and 852. Positions 812-834 (VSEDEGDELVGSKAERRDSRDVG) are disordered. The span at 824–834 (KAERRDSRDVG) shows a compositional bias: basic and acidic residues. Position 862 is a phosphothreonine (threonine 862). The tract at residues 872–900 (DQEQASKEYDEDSLIPSSPATETSDNISP) is disordered. Positions 886–900 (IPSSPATETSDNISP) are enriched in polar residues. ZU5 domains follow at residues 909–1064 (FLVS…IMSR) and 1066–1212 (CQDY…LSDC). Threonine 957 bears the Phosphothreonine mark. A Phosphotyrosine modification is found at tyrosine 1069. Serine 1078 is modified (phosphoserine). A UPA domain region spans residues 1197 to 1331 (ANFTTNVSAR…PVKVRDSSRE (135 aa)). Residues threonine 1374 and threonine 1376 each carry the phosphothreonine modification. Serine 1386 and serine 1388 each carry phosphoserine. Residues 1387–1862 (ESRLGFTSDT…KRASLKRGKQ (476 aa)) form a 55 kDa regulatory domain region. Threonine 1396 is subject to Phosphothreonine. Residues 1399–1483 (VEMRMAVIRE…EIVNMLEGSG (85 aa)) form the Death domain. Residues serine 1424, serine 1473, and serine 1482 each carry the phosphoserine modification. Residues 1481 to 1506 (GSGRQSRNLKPERRHGDREYSLSPSQ) form a disordered region. Basic and acidic residues predominate over residues 1489 to 1500 (LKPERRHGDREY). 3 positions are modified to phosphoserine: serine 1519, serine 1529, and serine 1612. Disordered regions lie at residues 1598-1720 (EGAH…GPHS) and 1744-1767 (VSTR…KEPS). Positions 1637 to 1647 (EGQRSEKKRQE) are enriched in basic and acidic residues. The span at 1648–1666 (VSGTEQDTETEVSLVSGQQ) shows a compositional bias: polar residues. Serine 1660, serine 1675, and serine 1685 each carry phosphoserine. Over residues 1681–1694 (VLDRSQARTLDWDK) the composition is skewed to basic and acidic residues. A compositionally biased stretch (polar residues) spans 1695-1720 (QGSTAVHPQEATQSSWQEEVTQGPHS).

In terms of assembly, component of the ankyrin-1 complex in the erythrocyte, composed of ANK1, RHCE, RHAG, SLC4A1, EPB42, GYPA, GYPB and AQP1. Interacts with a number of integral membrane proteins and cytoskeletal proteins. Interacts (via N-terminus) with SPTB/spectrin (beta chain). Also interacts with TTN/titin. Isoform Mu17 interacts with OBSCN isoform 3/obscurin. Interacts with HIF1AN. Interacts (via ANK 1-5 repeats) with RHCE; this interaction mediates the primary membrane attachment site for ANK1. Interacts (via ANK 1-2 repeats) with AQP1 (via the N-terminal). Interacts (via ANK 1-13 repeats) with EPB42. Interacts directly with SLC4A1 (via the cytoplasmic domain); this interaction is mediated by the SLC4A1 Band 3-II and Band 3-III dimers. In terms of processing, regulated by phosphorylation. Post-translationally, acylated by palmitic acid group(s). Hydroxylated by HIF1AN at several asparagine and 1 aspartate residue within ANK repeat region; hydroxylation seems to increase the conformational stability of this region and may also modulate protein-protein interactions mediated by the ANK repeat region.

The protein localises to the cytoplasm. It is found in the cytoskeleton. It localises to the membrane. The protein resides in the sarcoplasmic reticulum. Component of the ankyrin-1 complex, a multiprotein complex involved in the stability and shape of the erythrocyte membrane. Attaches integral membrane proteins to cytoskeletal elements; binds to the erythrocyte membrane protein band 4.2, to Na-K ATPase, to the lymphocyte membrane protein GP85, and to the cytoskeletal proteins fodrin, tubulin, vimentin and desmin. Erythrocyte ankyrins also link spectrin (beta chain) to the cytoplasmic domain of the erythrocytes anion exchange protein; they retain most or all of these binding functions. This chain is Ankyrin-1, found in Mus musculus (Mouse).